The primary structure comprises 31 residues: Photosystem II reaction center protein T (31 aa).

M1 is modified (N-formylmethionine). The helical transmembrane segment at 3–23 threads the bilayer; it reads SVAYILVLTMALAVLFFAIAF.

The protein belongs to the PsbT family. In terms of assembly, PSII is composed of 1 copy each of membrane proteins PsbA, PsbB, PsbC, PsbD, PsbE, PsbF, PsbH, PsbI, PsbJ, PsbK, PsbL, PsbM, PsbT, PsbX, PsbY, PsbZ, Psb30/Ycf12, peripheral proteins PsbO, CyanoQ (PsbQ), PsbU, PsbV and a large number of cofactors. It forms dimeric complexes.

The protein localises to the cellular thylakoid membrane. Found at the monomer-monomer interface of the photosystem II (PS II) dimer, plays a role in assembly and dimerization of PSII. PSII is a light-driven water plastoquinone oxidoreductase, using light energy to abstract electrons from H(2)O, generating a proton gradient subsequently used for ATP formation. In Synechocystis sp. (strain ATCC 27184 / PCC 6803 / Kazusa), this protein is Photosystem II reaction center protein T.